We begin with the raw amino-acid sequence, 1310 residues long: Major viral transcription factor ICP4 homolog (1310 aa).

Disordered stretches follow at residues Ala-117 to Glu-271, Gly-285 to Ile-454, and Gly-636 to Asp-696. Basic and acidic residues predominate over residues Pro-341 to Glu-350. 3 stretches are compositionally biased toward low complexity: residues Phe-351 to Ser-364, Pro-392 to Ser-407, and Pro-648 to Ala-666. Residues Arg-677–Lys-685 carry the Nuclear localization signal motif. 2 positions are modified to phosphoserine; by VZV ORF66: Ser-686 and Ser-722. Disordered stretches follow at residues Arg-1195–Val-1258 and Glu-1282–Gly-1310. Residues Arg-1217–Glu-1227 are compositionally biased toward basic and acidic residues. Positions Pro-1228 to Asp-1250 are enriched in acidic residues.

This sequence belongs to the herpesviridae ICP4 family. As to quaternary structure, interacts with IE4 and IE63. Interacts with human USF1 and SP1. In terms of processing, phosphorylated by ORF66 protein kinase on Ser-686 and Ser-722. Also phosphorylated by ORF47 protein kinase and by human CSNK2A1/CKII.

Its subcellular location is the host nucleus. The protein resides in the host cytoplasm. It localises to the virion tegument. Its function is as follows. Transcriptional transactivator. May interact with and recruit specific components of the general transcription machinery to viral promoters and stabilize their formation for transcription initiation. Negatively regulates its own transcription. This immediate early (EI) protein may be necessary in virion for viral pathogenesis. In Homo sapiens (Human), this protein is Major viral transcription factor ICP4 homolog.